The chain runs to 380 residues: Probable acyl-CoA dehydrogenase YngJ (380 aa).

FAD contacts are provided by residues 123–132 (FGLTEPNAGS), 156–158 (WIT), arginine 269, and 337–341 (QIHGG). Glutamate 364 serves as the catalytic Proton acceptor. 366–368 (TSE) is an FAD binding site.

The protein belongs to the acyl-CoA dehydrogenase family. It depends on FAD as a cofactor.

It catalyses the reaction a 2,3-saturated acyl-CoA + A = a 2,3-dehydroacyl-CoA + AH2. The chain is Probable acyl-CoA dehydrogenase YngJ (yngJ) from Bacillus subtilis (strain 168).